Here is an 824-residue protein sequence, read N- to C-terminus: AMP deaminase 2 (824 aa).

A disordered region spans residues 1-43; sequence MASYPGPGKSKAKYPFKKRAGLQASAAAPEARSGLGASPLQSA. A compositionally biased stretch (basic residues) spans 10–20; it reads SKAKYPFKKRA. Omega-N-methylarginine is present on Arg44. Phosphoserine occurs at positions 45, 63, and 79. Tyr90 is modified (phosphotyrosine). A phosphoserine mark is found at Ser96 and Ser113. Thr133 carries the post-translational modification Phosphothreonine. Ser135 and Ser137 each carry phosphoserine. Zn(2+) contacts are provided by His364 and His366. Residues His366 and 435-440 each bind substrate; that span reads KFNAKY. His633 is a binding site for Zn(2+). Glu636 contacts substrate. His655 functions as the Proton acceptor in the catalytic mechanism. Asp710 contacts Zn(2+). 711–714 contacts substrate; sequence DPLQ.

It belongs to the metallo-dependent hydrolases superfamily. Adenosine and AMP deaminases family. As to quaternary structure, homotetramer. It depends on Zn(2+) as a cofactor.

It catalyses the reaction AMP + H2O + H(+) = IMP + NH4(+). Its pathway is purine metabolism; IMP biosynthesis via salvage pathway; IMP from AMP: step 1/1. Its function is as follows. AMP deaminase plays a critical role in energy metabolism. Catalyzes the deamination of AMP to IMP and plays an important role in the purine nucleotide cycle. The protein is AMP deaminase 2 of Mus musculus (Mouse).